The chain runs to 1378 residues: MCDMLDNKLGNRLRVDFSNISKQIEIPNLLQLQKKSFDYFLNLDNGESGIEKVFKSIFPIHDPQNRLSLEYVSSEIGKPKYTIRECMERGLTYSVNLKMKIRLTLHEKDEKTGEKVGVKDIKEQEIYIREIPLMTDRVSFIINGVERVVVNQLHRSPGVIFKEEESSTVANKLVYTAQIIPDRGSWLYFEYDAKDVLYVRINKRRKVPVTMLFRALGYKKQDIIKLFYPIQTIHVKKDKFLTEFNPNDFMDRIEYDIKDEKGKIVHQAGKRLTKKKAEQLIKDGLKWIEYPVEILLNRYLANPIIDKESGEVLFDSLTLLDESKLAKIKEQKSFDIANDLANGVDAAIINSFAQDGETLKLLKQSENIDDENDLAAIRIYKVMRPGEPVVKDAAKAFVNDLFFNPERYDLTKVGRMKMNHKLGLEVPEYVTVLTNEDIIKTAKYLIKVKNGKGHIDDRDHLGNRRIRSIGELLANELHLGLAKMQKAIRDKFTSLNADLDKVMPYDLINPKMITTTIIEFFTGGQLSQFMDQTNPLSEVTHKRRLSALGEGGLVKERAGFEVRDVHATHYGRICPVETPEGQNIGLINTLSTYAKVNELGFVEAPYRKVVNGKVTNEVVYLTATQEEGLFIAPASTKVDAKGNIVEEFVEARQDGETILARREEVQLIDLCSGMVVGVAASLIPFLEHDDANRALMGSNMQRQAVPLLTASAPIVGTGMEQIIARDAWEAVKAKRGGVVEKVDNKSIFILGEDDKGPFIDHYTMEKNLRTNQNTNYIQHPIVKKGDIVKAGQIIADGPSMDQGELAIGKNALIAFMPWNGYNYEDAIVVSERIIREDTFTSVHIYEKEIEARELKDGIEEITKDIPNVKEEDVAHLDESGIAKIGTHIKPGMILVGKVSPKGEVKPTPEERLLRAIFGEKAGHVVNKSLYATASLEGVVVDVKIFTKKGYEKDDRAIKSYDKEKMALEKEHHDRLLMMDREEMLRVCALLSKAPLNSDQKIGDKNYKKGQTADISELEKINRFTLTTLIKAYSKEIQKEYDDLKNHFQNEKKKLKAEHDEKLEILEKDDILPSGVIKLVKVYIATKRKLKVGDKMAGRHGNKGIVSTIVPEVDMPYLPNGKSVDIALNPLGVPSRMNIGQILESHLGLIGLRLGDQIQEIFDRRQKDFLKELRAKMLEICSIPRLASEKEFIKSLSDEELLNYARDWSKGVKFATPVFEGVNIEEFSKLFEMAKIDMDGKTELYDGRTGEKIAERVHVGCMYMLKLHHLVDEKVHARSTGPYSLVTQQPVGGKALFGGQRFGEMEVWALEAYGAAHTLREMLTIKSDDVEGRFSAYKALTKGENVPATGIPETFFVLTNELKSLALDVEIFDKDEDNE.

Belongs to the RNA polymerase beta chain family. As to quaternary structure, the RNAP catalytic core consists of 2 alpha, 1 beta, 1 beta' and 1 omega subunit. When a sigma factor is associated with the core the holoenzyme is formed, which can initiate transcription.

It carries out the reaction RNA(n) + a ribonucleoside 5'-triphosphate = RNA(n+1) + diphosphate. Functionally, DNA-dependent RNA polymerase catalyzes the transcription of DNA into RNA using the four ribonucleoside triphosphates as substrates. The polypeptide is DNA-directed RNA polymerase subunit beta (Campylobacter jejuni subsp. jejuni serotype O:23/36 (strain 81-176)).